The primary structure comprises 398 residues: tRNA(Ile)-lysidine synthase (398 aa).

Residue 25–30 (SGGVDS) coordinates ATP.

It belongs to the tRNA(Ile)-lysidine synthase family.

The protein localises to the cytoplasm. The enzyme catalyses cytidine(34) in tRNA(Ile2) + L-lysine + ATP = lysidine(34) in tRNA(Ile2) + AMP + diphosphate + H(+). Ligates lysine onto the cytidine present at position 34 of the AUA codon-specific tRNA(Ile) that contains the anticodon CAU, in an ATP-dependent manner. Cytidine is converted to lysidine, thus changing the amino acid specificity of the tRNA from methionine to isoleucine. This is tRNA(Ile)-lysidine synthase from Francisella tularensis subsp. holarctica (strain OSU18).